A 146-amino-acid chain; its full sequence is uncharacterized protein (146 aa).

Positions 1–17 (MKRLLILTALLPFVGFA) are cleaved as a signal peptide. Disordered regions lie at residues 27-54 (NQPG…KGML) and 70-146 (ENQI…TIGP). Over residues 32-54 (QIPSQQRMQTQMQTQQIQQKGML) the composition is skewed to low complexity. Polar residues predominate over residues 77–118 (SQRVLQSQPGERNPARQQMLPNTNGGMLNSNRNPDSSLNQQH).

This is an uncharacterized protein from Escherichia coli (strain K12).